The chain runs to 273 residues: NH(3)-dependent NAD(+) synthetase (273 aa).

47 to 54 serves as a coordination point for ATP; it reads GISGGQDS. Residue aspartate 53 participates in Mg(2+) binding. Arginine 139 contributes to the deamido-NAD(+) binding site. ATP is bound at residue threonine 159. Residue glutamate 164 coordinates Mg(2+). The deamido-NAD(+) site is built by lysine 172 and aspartate 179. ATP-binding residues include lysine 188 and threonine 210. Deamido-NAD(+) is bound at residue 259-260; it reads HK.

This sequence belongs to the NAD synthetase family. Homodimer.

It catalyses the reaction deamido-NAD(+) + NH4(+) + ATP = AMP + diphosphate + NAD(+) + H(+). Its pathway is cofactor biosynthesis; NAD(+) biosynthesis; NAD(+) from deamido-NAD(+) (ammonia route): step 1/1. Functionally, catalyzes the ATP-dependent amidation of deamido-NAD to form NAD. Uses ammonia as a nitrogen source. The polypeptide is NH(3)-dependent NAD(+) synthetase (Staphylococcus haemolyticus (strain JCSC1435)).